Consider the following 118-residue polypeptide: Turripeptide NCR-01 (118 aa).

The signal sequence occupies residues 1-16 (MLRLILAVALVAACLA). Residues 63–118 (QGFQGFLPQPHQKRDSYQHGGYQHQQSFDNFQGSGGMNNDNSDDSFALRNFNNDGY) form a disordered region. Polar residues predominate over residues 85 to 102 (QHQQSFDNFQGSGGMNND).

In terms of tissue distribution, expressed by the venom duct.

Its subcellular location is the secreted. The protein is Turripeptide NCR-01 of Gemmula speciosa (Splendid gem-turris).